The primary structure comprises 60 residues: UPF0434 protein HCH_02705 (60 aa).

This sequence belongs to the UPF0434 family.

This Hahella chejuensis (strain KCTC 2396) protein is UPF0434 protein HCH_02705.